The sequence spans 419 residues: Serine hydroxymethyltransferase (419 aa).

Residues Leu-121 and 125-127 (GHL) contribute to the (6S)-5,6,7,8-tetrahydrofolate site. The residue at position 229 (Lys-229) is an N6-(pyridoxal phosphate)lysine.

It belongs to the SHMT family. Homodimer. It depends on pyridoxal 5'-phosphate as a cofactor.

It localises to the cytoplasm. It carries out the reaction (6R)-5,10-methylene-5,6,7,8-tetrahydrofolate + glycine + H2O = (6S)-5,6,7,8-tetrahydrofolate + L-serine. The protein operates within one-carbon metabolism; tetrahydrofolate interconversion. Its pathway is amino-acid biosynthesis; glycine biosynthesis; glycine from L-serine: step 1/1. Catalyzes the reversible interconversion of serine and glycine with tetrahydrofolate (THF) serving as the one-carbon carrier. This reaction serves as the major source of one-carbon groups required for the biosynthesis of purines, thymidylate, methionine, and other important biomolecules. Also exhibits THF-independent aldolase activity toward beta-hydroxyamino acids, producing glycine and aldehydes, via a retro-aldol mechanism. The protein is Serine hydroxymethyltransferase of Histophilus somni (strain 2336) (Haemophilus somnus).